A 431-amino-acid polypeptide reads, in one-letter code: Serine/threonine-protein kinase Sgk1 (431 aa).

Residues 1–60 form a necessary for localization to the mitochondria region; sequence MTVKTEAAKGTLTYSRMRGMVAILIAFMKQRRMGLNDFIQKIANNSYACKHPEVQSILKI. The interval 66–92 is disordered; the sequence is PELMNANPSPPPSPSQQINLGPSSNPH. At S74 the chain carries Phosphoserine. Phosphoserine; by MAPK7 is present on S78. Positions 81–91 are enriched in polar residues; the sequence is QQINLGPSSNP. Residues 98-355 form the Protein kinase domain; the sequence is FHFLKVIGKG…FMEIKSHVFF (258 aa). Residues 104-112 and K127 contribute to the ATP site; that span reads IGKGSFGKV. The Nuclear localization signal motif lies at 131–141; the sequence is KKAILKKKEEK. D222 (proton acceptor) is an active-site residue. T256 is modified (phosphothreonine; by PDPK1). Residues 356–431 form the AGC-kinase C-terminal domain; that stretch reads SLINWDDLIN…SYAPPTDSFL (76 aa). Phosphothreonine; by PKA is present on T369. A phosphoserine mark is found at S397, S401, and S422.

Belongs to the protein kinase superfamily. AGC Ser/Thr protein kinase family. In terms of assembly, homodimer; disulfide-linked. Forms a trimeric complex with FBXW7 and NOTCH1. Interacts with MAPK3/ERK1, MAPK1/ERK2, MAP2K1/MEK1, MAP2K2/MEK2, NEDD4, NEDD4L, MAPT/TAU, MAPK7, CREB1, SLC9A3R2/NHERF2 and KCNJ1/ROMK1. Associates with the mammalian target of rapamycin complex 2 (mTORC2) via an interaction with MAPKAP1/SIN1. Regulated by phosphorylation. Activated by phosphorylation on Ser-422 by mTORC2, transforming it into a substrate for PDPK1 which phosphorylates it on Thr-256. Phosphorylation on Ser-397 and Ser-401 are also essential for its activity. Phosphorylation on Ser-78 by MAPK7 is required for growth factor-induced cell cycle progression. Post-translationally, ubiquitinated by NEDD4L; which promotes proteasomal degradation. Ubiquitinated by SYVN1 at the endoplasmic reticulum; which promotes rapid proteasomal degradation and maintains a high turnover rate in resting cells.

Its subcellular location is the cytoplasm. The protein resides in the nucleus. It localises to the endoplasmic reticulum membrane. It is found in the cell membrane. The protein localises to the mitochondrion. It catalyses the reaction L-seryl-[protein] + ATP = O-phospho-L-seryl-[protein] + ADP + H(+). The catalysed reaction is L-threonyl-[protein] + ATP = O-phospho-L-threonyl-[protein] + ADP + H(+). With respect to regulation, two specific sites, one in the kinase domain (Thr-256) and the other in the C-terminal regulatory region (Ser-422), need to be phosphorylated for its full activation. Phosphorylation at Ser-397 and Ser-401 are also essential for its activity. Activated by WNK1, WNK2, WNK3 and WNK4; which promote phosphorylation by mTORC2. Serine/threonine-protein kinase which is involved in the regulation of a wide variety of ion channels, membrane transporters, cellular enzymes, transcription factors, neuronal excitability, cell growth, proliferation, survival, migration and apoptosis. Plays an important role in cellular stress response. Contributes to regulation of renal Na(+) retention, renal K(+) elimination, salt appetite, gastric acid secretion, intestinal Na(+)/H(+) exchange and nutrient transport, insulin-dependent salt sensitivity of blood pressure, salt sensitivity of peripheral glucose uptake, cardiac repolarization and memory consolidation. Up-regulates Na(+) channels: SCNN1A/ENAC, SCN5A and ASIC1/ACCN2, K(+) channels: KCNJ1/ROMK1, KCNA1-5, KCNQ1-5 and KCNE1, epithelial Ca(2+) channels: TRPV5 and TRPV6, chloride channels: BSND, CLCN2 and CFTR, glutamate transporters: SLC1A3/EAAT1, SLC1A2 /EAAT2, SLC1A1/EAAT3, SLC1A6/EAAT4 and SLC1A7/EAAT5, amino acid transporters: SLC1A5/ASCT2, SLC38A1/SN1 and SLC6A19, creatine transporter: SLC6A8, Na(+)/dicarboxylate cotransporter: SLC13A2/NADC1, Na(+)-dependent phosphate cotransporter: SLC34A2/NAPI-2B, glutamate receptor: GRIK2/GLUR6. Up-regulates carriers: SLC9A3/NHE3, SLC12A1/NKCC2, SLC12A3/NCC, SLC5A3/SMIT, SLC2A1/GLUT1, SLC5A1/SGLT1 and SLC15A2/PEPT2. Regulates enzymes: GSK3A/B, PMM2 and Na(+)/K(+) ATPase, and transcription factors: CTNNB1 and nuclear factor NF-kappa-B. Stimulates sodium transport into epithelial cells by enhancing the stability and expression of SCNN1A/ENAC. This is achieved by phosphorylating the NEDD4L ubiquitin E3 ligase, promoting its interaction with 14-3-3 proteins, thereby preventing it from binding to SCNN1A/ENAC and targeting it for degradation. Regulates store-operated Ca(+2) entry (SOCE) by stimulating ORAI1 and STIM1. Regulates KCNJ1/ROMK1 directly via its phosphorylation or indirectly via increased interaction with SLC9A3R2/NHERF2. Phosphorylates MDM2 and activates MDM2-dependent ubiquitination of p53/TP53. Phosphorylates MAPT/TAU and mediates microtubule depolymerization and neurite formation in hippocampal neurons. Phosphorylates SLC2A4/GLUT4 and up-regulates its activity. Phosphorylates APBB1/FE65 and promotes its localization to the nucleus. Phosphorylates MAPK1/ERK2 and activates it by enhancing its interaction with MAP2K1/MEK1 and MAP2K2/MEK2. Phosphorylates FBXW7 and plays an inhibitory role in the NOTCH1 signaling. Phosphorylates FOXO1 resulting in its relocalization from the nucleus to the cytoplasm. Phosphorylates FOXO3, promoting its exit from the nucleus and interference with FOXO3-dependent transcription. Phosphorylates BRAF and MAP3K3/MEKK3 and inhibits their activity. Phosphorylates SLC9A3/NHE3 in response to dexamethasone, resulting in its activation and increased localization at the cell membrane. Phosphorylates CREB1. Necessary for vascular remodeling during angiogenesis. This is Serine/threonine-protein kinase Sgk1 (SGK1) from Macaca fascicularis (Crab-eating macaque).